Reading from the N-terminus, the 278-residue chain is S-formylglutathione hydrolase YeiG (278 aa).

Active-site charge relay system residues include S145, D223, and H256.

The protein belongs to the esterase D family.

The catalysed reaction is S-formylglutathione + H2O = formate + glutathione + H(+). Its function is as follows. Serine hydrolase involved in the detoxification of formaldehyde. Hydrolyzes S-formylglutathione to glutathione and formate. This chain is S-formylglutathione hydrolase YeiG (yeiG), found in Shigella flexneri serotype 5b (strain 8401).